The sequence spans 191 residues: Acireductone dioxygenase 2 (191 aa).

Fe(2+) is bound by residues His-102, His-104, Glu-108, and His-146. 4 residues coordinate Ni(2+): His-102, His-104, Glu-108, and His-146.

It belongs to the acireductone dioxygenase (ARD) family. Monomer. Fe(2+) serves as cofactor. It depends on Ni(2+) as a cofactor.

It carries out the reaction 1,2-dihydroxy-5-(methylsulfanyl)pent-1-en-3-one + O2 = 3-(methylsulfanyl)propanoate + CO + formate + 2 H(+). It catalyses the reaction 1,2-dihydroxy-5-(methylsulfanyl)pent-1-en-3-one + O2 = 4-methylsulfanyl-2-oxobutanoate + formate + 2 H(+). It functions in the pathway amino-acid biosynthesis; L-methionine biosynthesis via salvage pathway; L-methionine from S-methyl-5-thio-alpha-D-ribose 1-phosphate: step 5/6. Catalyzes 2 different reactions between oxygen and the acireductone 1,2-dihydroxy-3-keto-5-methylthiopentene (DHK-MTPene) depending upon the metal bound in the active site. Fe-containing acireductone dioxygenase (Fe-ARD) produces formate and 2-keto-4-methylthiobutyrate (KMTB), the alpha-ketoacid precursor of methionine in the methionine recycle pathway. Ni-containing acireductone dioxygenase (Ni-ARD) produces methylthiopropionate, carbon monoxide and formate, and does not lie on the methionine recycle pathway. The polypeptide is Acireductone dioxygenase 2 (Nocardia farcinica (strain IFM 10152)).